A 1435-amino-acid polypeptide reads, in one-letter code: Nitric oxide synthase 1 (1435 aa).

Residues 1–206 (MEEHVFGVQQ…LQGSGDKNEL (206 aa)) are interaction with NOSIP. The PDZ domain occupies 17 to 99 (SVRLFKRKVG…ETHVVLILRG (83 aa)). 2 disordered regions span residues 110–201 (TFTG…QGSG) and 277–304 (NNPY…SKCP). Residues 164-246 (QGHGQEAGSP…TGVQVDRDFD (83 aa)) form an interaction with DYNLL1/PIN region. Residues 290-300 (GKQSPTKNGSP) are compositionally biased toward polar residues. Ser-340 is a binding site for (6R)-L-erythro-5,6,7,8-tetrahydrobiopterin. Cys-421 lines the heme b pocket. L-arginine-binding residues include Gln-484, Trp-593, Tyr-594, and Glu-598. (6R)-L-erythro-5,6,7,8-tetrahydrobiopterin is bound by residues Val-683, Trp-684, and Phe-697. A heme b-binding site is contributed by Tyr-712. The interval 731 to 751 (KRRAIGFKKLAEAVKFSAKLM) is calmodulin-binding. In terms of domain architecture, Flavodoxin-like spans 761 to 941 (ATILYATETG…AFRTWAKKVF (181 aa)). Thr-767, Glu-768, Thr-769, Lys-771, Ser-772, Ser-813, Thr-814, and Gly-818 together coordinate FMN. Residues Ser-853, Ser-863, and Ser-864 each carry the phosphoserine modification. FMN contacts are provided by Ser-892, His-897, Cys-899, Glu-925, and Gln-929. The 248-residue stretch at 996–1243 (KRVSAARLLS…VRGAPSFRLP (248 aa)) folds into the FAD-binding FR-type domain. Arg-1016 contacts NADP(+). Residues His-1038, Arg-1179, Tyr-1180, Tyr-1181, Ser-1182, Thr-1197, and Ala-1199 each coordinate FAD. Ser-1202 provides a ligand contact to NADP(+). The FAD site is built by Tyr-1203, Val-1216, Cys-1217, and Ser-1218. 10 residues coordinate NADP(+): Thr-1257, Arg-1290, Ser-1319, Arg-1320, Lys-1326, Tyr-1328, Gln-1330, Asp-1363, Thr-1404, and Arg-1406.

It belongs to the NOS family. Homodimer. Interacts with DLG4; the interaction possibly being prevented by the association between NOS1 and CAPON. Forms a ternary complex with CAPON and RASD1. Forms a ternary complex with CAPON and SYN1. Interacts with ZDHHC23. Interacts with NOSIP; which may impair its synaptic location. Interacts with HTR4. Interacts with SLC6A4. Interacts with VAC14. Interacts (via N-terminal domain) with DLG4 (via N-terminal tandem pair of PDZ domains). Interacts with SLC6A4. Forms a complex with ASL, ASS1 and SLC7A1; the complex regulates cell-autonomous L-arginine synthesis and citrulline recycling while channeling extracellular L-arginine to nitric oxide synthesis pathway. Interacts with DMD; localizes NOS1 to sarcolemma in muscle cells. Interacts with DYNLL1; inhibits the nitric oxide synthase activity. Heme b serves as cofactor. It depends on FAD as a cofactor. The cofactor is FMN. (6R)-L-erythro-5,6,7,8-tetrahydrobiopterin is required as a cofactor. Post-translationally, ubiquitinated; mediated by STUB1/CHIP in the presence of Hsp70 and Hsp40 (in vitro).

The protein resides in the cell membrane. It is found in the sarcolemma. Its subcellular location is the cell projection. The protein localises to the dendritic spine. It carries out the reaction 2 L-arginine + 3 NADPH + 4 O2 + H(+) = 2 L-citrulline + 2 nitric oxide + 3 NADP(+) + 4 H2O. Stimulated by calcium/calmodulin. Inhibited by DYNLL1 that prevents the dimerization of the protein. Inhibited by NOSIP. Its function is as follows. Produces nitric oxide (NO) which is a messenger molecule with diverse functions throughout the body. In the brain and peripheral nervous system, NO displays many properties of a neurotransmitter. Probably has nitrosylase activity and mediates cysteine S-nitrosylation of cytoplasmic target proteins such SRR. The sequence is that of Nitric oxide synthase 1 (NOS1) from Oryctolagus cuniculus (Rabbit).